The primary structure comprises 348 residues: Histidinol-phosphate aminotransferase (348 aa).

Lys-211 carries the post-translational modification N6-(pyridoxal phosphate)lysine.

Belongs to the class-II pyridoxal-phosphate-dependent aminotransferase family. Histidinol-phosphate aminotransferase subfamily. In terms of assembly, homodimer. The cofactor is pyridoxal 5'-phosphate.

It carries out the reaction L-histidinol phosphate + 2-oxoglutarate = 3-(imidazol-4-yl)-2-oxopropyl phosphate + L-glutamate. It functions in the pathway amino-acid biosynthesis; L-histidine biosynthesis; L-histidine from 5-phospho-alpha-D-ribose 1-diphosphate: step 7/9. The protein is Histidinol-phosphate aminotransferase of Pseudomonas entomophila (strain L48).